A 290-amino-acid chain; its full sequence is Fructose-1,6-bisphosphatase class 1 (290 aa).

Mg(2+) is bound by residues glutamate 78, aspartate 96, leucine 98, and aspartate 99. Residues 99 to 102 (DGSS), tyrosine 201, and lysine 226 contribute to the substrate site. Glutamate 232 contributes to the Mg(2+) binding site.

The protein belongs to the FBPase class 1 family. Homotetramer. The cofactor is Mg(2+).

It localises to the cytoplasm. The enzyme catalyses beta-D-fructose 1,6-bisphosphate + H2O = beta-D-fructose 6-phosphate + phosphate. It participates in carbohydrate biosynthesis; gluconeogenesis. This Helicobacter pylori (strain J99 / ATCC 700824) (Campylobacter pylori J99) protein is Fructose-1,6-bisphosphatase class 1.